Consider the following 337-residue polypeptide: ATP-dependent 6-phosphofructokinase (337 aa).

Residue glycine 11 coordinates ATP. 21–25 (RAVVR) is an ADP binding site. ATP contacts are provided by residues 72–73 (RY) and 102–105 (GDGS). Aspartate 103 provides a ligand contact to Mg(2+). 125–127 (TID) provides a ligand contact to substrate. Aspartate 127 serves as the catalytic Proton acceptor. Arginine 154 contributes to the ADP binding site. Substrate contacts are provided by residues arginine 162 and 169–171 (MGR). ADP contacts are provided by residues 185 to 187 (GAD), lysine 212, and 214 to 216 (KNH). Substrate is bound by residues glutamate 223, arginine 245, and 251–254 (HILR).

It belongs to the phosphofructokinase type A (PFKA) family. ATP-dependent PFK group I subfamily. Prokaryotic clade 'B1' sub-subfamily. Homotetramer. Mg(2+) is required as a cofactor.

The protein resides in the cytoplasm. It catalyses the reaction beta-D-fructose 6-phosphate + ATP = beta-D-fructose 1,6-bisphosphate + ADP + H(+). It functions in the pathway carbohydrate degradation; glycolysis; D-glyceraldehyde 3-phosphate and glycerone phosphate from D-glucose: step 3/4. With respect to regulation, allosterically activated by ADP and other diphosphonucleosides, and allosterically inhibited by phosphoenolpyruvate. Catalyzes the phosphorylation of D-fructose 6-phosphate to fructose 1,6-bisphosphate by ATP, the first committing step of glycolysis. The chain is ATP-dependent 6-phosphofructokinase from Streptococcus pyogenes serotype M3 (strain SSI-1).